Reading from the N-terminus, the 449-residue chain is Neurexin-1a-beta (449 aa).

The first 38 residues, 1-38, serve as a signal peptide directing secretion; sequence MLRLWPGGAPGGLASILLRISLRLALWLPPLTLGSALA. Residues 39–373 are Extracellular-facing; it reads EGPGELYVPQ…EVIRESSSTT (335 aa). Positions 71–272 constitute a Laminin G-like domain; the sequence is TTYIFGRDGG…DPNVRVEGSA (202 aa). A disordered region spans residues 276-366; that stretch reads GDMPSSSITP…AKGYPSPEVI (91 aa). Residues 280–311 show a composition bias toward low complexity; the sequence is SSSITPQSSVSAAGNRSETSPSITDITTTTAS. Positions 312–322 are enriched in polar residues; the sequence is NRQGKQTTTPQ. Residues 374 to 394 traverse the membrane as a helical segment; the sequence is GMVVGIVAAAALCILILLYAM. Residues 395–449 are Cytoplasmic-facing; the sequence is YKYRNRDEGSYHVDESRNYISNSATQPNGAAVKEKPIGVPKNKKDKKNKDKEYYV. Residues 415–449 are disordered; the sequence is SNSATQPNGAAVKEKPIGVPKNKKDKKNKDKEYYV.

It belongs to the neurexin family.

The protein localises to the membrane. In terms of biological role, neuronal cell surface protein that may be involved in cell recognition and cell adhesion. May play a role in formation or maintenance of synaptic junctions. The protein is Neurexin-1a-beta (nrxn1a) of Danio rerio (Zebrafish).